Here is a 397-residue protein sequence, read N- to C-terminus: Elongation factor Tu (397 aa).

The tr-type G domain occupies 10-207; sequence KPHCNIGTIG…AVDEWIPQPE (198 aa). Positions 19-26 are G1; the sequence is GHVDHGKT. Residue 19-26 participates in GTP binding; sequence GHVDHGKT. A Mg(2+)-binding site is contributed by threonine 26. The interval 61–65 is G2; sequence GITIS. Positions 82–85 are G3; the sequence is DCPG. Residues 82–86 and 137–140 each bind GTP; these read DCPGH and NKVD. The interval 137–140 is G4; that stretch reads NKVD. Residues 175–177 form a G5 region; sequence SAL.

It belongs to the TRAFAC class translation factor GTPase superfamily. Classic translation factor GTPase family. EF-Tu/EF-1A subfamily. As to quaternary structure, monomer.

The protein localises to the cytoplasm. The enzyme catalyses GTP + H2O = GDP + phosphate + H(+). Functionally, GTP hydrolase that promotes the GTP-dependent binding of aminoacyl-tRNA to the A-site of ribosomes during protein biosynthesis. This chain is Elongation factor Tu, found in Sphingopyxis alaskensis (strain DSM 13593 / LMG 18877 / RB2256) (Sphingomonas alaskensis).